The following is a 215-amino-acid chain: uncharacterized protein (215 aa).

Transmembrane regions (helical) follow at residues 1–21, 36–56, 67–87, 92–112, and 118–138; these read MTAE…AIGM, VLIG…FADV, SRIA…NILV, IVGL…MVIG, and LGIY…QLTF.

Belongs to the MgtC/SapB family.

It localises to the cell inner membrane. This is an uncharacterized protein from Escherichia coli O157:H7.